The chain runs to 465 residues: Dihydrolipoyl dehydrogenase (465 aa).

FAD contacts are provided by residues 34-42, K51, and G114; that span reads EEREAGGTC. Residues C42 and C47 are joined by a disulfide bond. NAD(+) is bound by residues 180-184, E203, V237, and 264-267; these read GGGVI and SIGR. D307 and A315 together coordinate FAD. Residue H439 is the Proton acceptor of the active site.

This sequence belongs to the class-I pyridine nucleotide-disulfide oxidoreductase family. Requires FAD as cofactor.

It is found in the cytoplasm. The catalysed reaction is N(6)-[(R)-dihydrolipoyl]-L-lysyl-[protein] + NAD(+) = N(6)-[(R)-lipoyl]-L-lysyl-[protein] + NADH + H(+). In terms of biological role, the branched-chain alpha-keto dehydrogenase complex catalyzes the overall conversion of alpha-keto acids to acyl-CoA and CO(2). It contains multiple copies of 3 enzymatic components: branched-chain alpha-keto acid decarboxylase (E1), lipoamide acyltransferase (E2) and lipoamide dehydrogenase (E3). This Chlamydia muridarum (strain MoPn / Nigg) protein is Dihydrolipoyl dehydrogenase (lpdA).